A 357-amino-acid polypeptide reads, in one-letter code: UDP-N-acetylglucosamine--N-acetylmuramyl-(pentapeptide) pyrophosphoryl-undecaprenol N-acetylglucosamine transferase (357 aa).

UDP-N-acetyl-alpha-D-glucosamine contacts are provided by residues 11–13 (TGG), N123, R159, S187, I241, 260–265 (ALTVAE), and Q286.

It belongs to the glycosyltransferase 28 family. MurG subfamily.

It is found in the cell inner membrane. The enzyme catalyses di-trans,octa-cis-undecaprenyl diphospho-N-acetyl-alpha-D-muramoyl-L-alanyl-D-glutamyl-meso-2,6-diaminopimeloyl-D-alanyl-D-alanine + UDP-N-acetyl-alpha-D-glucosamine = di-trans,octa-cis-undecaprenyl diphospho-[N-acetyl-alpha-D-glucosaminyl-(1-&gt;4)]-N-acetyl-alpha-D-muramoyl-L-alanyl-D-glutamyl-meso-2,6-diaminopimeloyl-D-alanyl-D-alanine + UDP + H(+). It functions in the pathway cell wall biogenesis; peptidoglycan biosynthesis. Cell wall formation. Catalyzes the transfer of a GlcNAc subunit on undecaprenyl-pyrophosphoryl-MurNAc-pentapeptide (lipid intermediate I) to form undecaprenyl-pyrophosphoryl-MurNAc-(pentapeptide)GlcNAc (lipid intermediate II). This Aromatoleum aromaticum (strain DSM 19018 / LMG 30748 / EbN1) (Azoarcus sp. (strain EbN1)) protein is UDP-N-acetylglucosamine--N-acetylmuramyl-(pentapeptide) pyrophosphoryl-undecaprenol N-acetylglucosamine transferase.